The sequence spans 365 residues: MGAAGSKLEKALGDQFPEGERYFGFENFGNTCYCNSVLQALYFCAPFREQLLEHYANNKADAEENLLTCLADLFSQISSQKKKTGVIAPKRFVQRLKKQNELFRSYMHQDAHEFLNYLLNELVEILEKETQATKADNETSSSPEKIANVLKAPLANGVHKEPIVTWVHKIFQGILTNETRCLRCETVTARDETFLDLSLDIEQNSSITSCLKNFSSTETLHAEDKFFCDKCCSLQEAQKRMKIKKPPHILVIHLKRFKYMEQLGRYKKLSYRVVFPLELKLSNTVDEYVDIEYSLFAVVVHVGSGPNHGHYVSLVKSHNHWLFFDDESVEIIEESAVQTFFGSSQEYSSNTDHGYILLYESLGTR.

Glycine 2 carries the N-myristoyl glycine lipid modification. Residues 23–362 (FGFENFGNTC…HGYILLYESL (340 aa)) enclose the USP domain. The Nucleophile role is filled by cysteine 32. Positions 81-98 (KKKTGVIAPKRFVQRLKK) match the Bipartite nuclear localization signal motif. The Proton acceptor role is filled by histidine 310.

Belongs to the peptidase C19 family. As to expression, constitutively and ubiquitously expressed.

It localises to the nucleus. The enzyme catalyses Thiol-dependent hydrolysis of ester, thioester, amide, peptide and isopeptide bonds formed by the C-terminal Gly of ubiquitin (a 76-residue protein attached to proteins as an intracellular targeting signal).. In terms of biological role, recognizes and hydrolyzes the peptide bond at the C-terminal Gly of ubiquitin. Involved in the processing of poly-ubiquitin precursors as well as that of ubiquitinated proteins. Required for the correct development of pollen. The chain is Ubiquitin carboxyl-terminal hydrolase 4 (UBP4) from Arabidopsis thaliana (Mouse-ear cress).